A 286-amino-acid polypeptide reads, in one-letter code: Ribonuclease H1 (286 aa).

The span at 101-115 (EPLDGDGHESAEPYA) shows a compositional bias: basic and acidic residues. Positions 101 to 127 (EPLDGDGHESAEPYAKHMKPSVEPAPP) are disordered. The region spanning 136–282 (MGDFVVVYTD…ADRLAREGAK (147 aa)) is the RNase H type-1 domain. Mg(2+)-binding residues include Asp-145, Glu-186, Asp-210, and Asp-274.

This sequence belongs to the RNase H family. In terms of assembly, monomer. Requires Mg(2+) as cofactor. As to expression, ubiquitous.

Its subcellular location is the cytoplasm. The enzyme catalyses Endonucleolytic cleavage to 5'-phosphomonoester.. In the presence of magnesium, manganese is inhibitory. Endonuclease that specifically degrades the RNA of RNA-DNA hybrids. Plays a role in RNA polymerase II (RNAp II) transcription termination by degrading R-loop RNA-DNA hybrid formation at G-rich pause sites located downstream of the poly(A) site and behind the elongating RNAp II. The chain is Ribonuclease H1 (RNASEH1) from Homo sapiens (Human).